The sequence spans 339 residues: U11/U12 small nuclear ribonucleoprotein 48 kDa protein (339 aa).

Residues 55-82 (VVICPYDSNHHMPKSSLAKHMASCRLRK) form a CHHC U11-48K-type zinc finger. Cys58, His64, His74, and Cys78 together coordinate Zn(2+). Residues Lys87 and Lys104 each participate in a glycyl lysine isopeptide (Lys-Gly) (interchain with G-Cter in SUMO2) cross-link. A disordered region spans residues 255–339 (HWQEEQEKAE…HSHKRRKQKI (85 aa)). Residues 294 to 309 (RHRRDRSRSPHKRKRN) are compositionally biased toward basic residues. The span at 310–328 (KDKDKNCESRRRKERDGER) shows a compositional bias: basic and acidic residues. Basic residues predominate over residues 329 to 339 (HHSHKRRKQKI).

Component of the U11/U12 snRNPs that are part of the U12-type spliceosome. Not found in the major spliceosome.

The protein resides in the nucleus. Its function is as follows. Likely involved in U12-type 5' splice site recognition. This is U11/U12 small nuclear ribonucleoprotein 48 kDa protein (SNRNP48) from Homo sapiens (Human).